Here is a 176-residue protein sequence, read N- to C-terminus: Inner membrane-spanning protein YciB (176 aa).

Transmembrane regions (helical) follow at residues 24–44 (TATA…AFRH), 49–69 (PMLW…LVLH), 76–96 (WKPT…QLAF), 119–139 (LSVV…FVAY), and 149–169 (FKLF…SLWL).

It belongs to the YciB family.

Its subcellular location is the cell inner membrane. Functionally, plays a role in cell envelope biogenesis, maintenance of cell envelope integrity and membrane homeostasis. This Paraburkholderia phytofirmans (strain DSM 17436 / LMG 22146 / PsJN) (Burkholderia phytofirmans) protein is Inner membrane-spanning protein YciB.